The chain runs to 660 residues: Bifunctional polymyxin resistance protein ArnA (660 aa).

The segment at methionine 1–leucine 304 is formyltransferase ArnAFT. Histidine 86–isoleucine 88 is a (6R)-10-formyltetrahydrofolate binding site. Histidine 104 serves as the catalytic Proton donor; for formyltransferase activity. (6R)-10-formyltetrahydrofolate contacts are provided by residues arginine 114 and valine 136 to aspartate 140. The tract at residues arginine 314–serine 660 is dehydrogenase ArnADH. Residues aspartate 347 and aspartate 368–isoleucine 369 each bind NAD(+). Residues alanine 393, tyrosine 398, and threonine 432 to serine 433 each bind UDP-alpha-D-glucuronate. Residue glutamate 434 is the Proton acceptor; for decarboxylase activity of the active site. Residues arginine 460, asparagine 492, lysine 526–arginine 535, and tyrosine 613 contribute to the UDP-alpha-D-glucuronate site. Residue arginine 619 is the Proton donor; for decarboxylase activity of the active site.

It in the N-terminal section; belongs to the Fmt family. UDP-L-Ara4N formyltransferase subfamily. In the C-terminal section; belongs to the NAD(P)-dependent epimerase/dehydratase family. UDP-glucuronic acid decarboxylase subfamily. Homohexamer, formed by a dimer of trimers.

It carries out the reaction UDP-alpha-D-glucuronate + NAD(+) = UDP-beta-L-threo-pentopyranos-4-ulose + CO2 + NADH. The enzyme catalyses UDP-4-amino-4-deoxy-beta-L-arabinose + (6R)-10-formyltetrahydrofolate = UDP-4-deoxy-4-formamido-beta-L-arabinose + (6S)-5,6,7,8-tetrahydrofolate + H(+). It participates in nucleotide-sugar biosynthesis; UDP-4-deoxy-4-formamido-beta-L-arabinose biosynthesis; UDP-4-deoxy-4-formamido-beta-L-arabinose from UDP-alpha-D-glucuronate: step 1/3. It functions in the pathway nucleotide-sugar biosynthesis; UDP-4-deoxy-4-formamido-beta-L-arabinose biosynthesis; UDP-4-deoxy-4-formamido-beta-L-arabinose from UDP-alpha-D-glucuronate: step 3/3. The protein operates within bacterial outer membrane biogenesis; lipopolysaccharide biosynthesis. Functionally, bifunctional enzyme that catalyzes the oxidative decarboxylation of UDP-glucuronic acid (UDP-GlcUA) to UDP-4-keto-arabinose (UDP-Ara4O) and the addition of a formyl group to UDP-4-amino-4-deoxy-L-arabinose (UDP-L-Ara4N) to form UDP-L-4-formamido-arabinose (UDP-L-Ara4FN). The modified arabinose is attached to lipid A and is required for resistance to polymyxin and cationic antimicrobial peptides. This is Bifunctional polymyxin resistance protein ArnA from Escherichia coli (strain K12 / MC4100 / BW2952).